The chain runs to 862 residues: Probable linoleate 9S-lipoxygenase 5 (862 aa).

The PLAT domain maps to 36 to 161 (NDVNASLLDG…KYKSERIFFA (126 aa)). In terms of domain architecture, Lipoxygenase spans 164-862 (AYLPGETPEP…GKGIPNSVSI (699 aa)). The Fe cation site is built by His523, His528, His714, Asn718, and Ile862.

It belongs to the lipoxygenase family. Monomer. Fe cation is required as a cofactor. In terms of tissue distribution, not detected in leaves, stems, flowers, roots, tubers and stolons during normal growth and development.

The protein resides in the cytoplasm. It carries out the reaction (9Z,12Z)-octadecadienoate + O2 = (9S)-hydroperoxy-(10E,12Z)-octadecadienoate. The protein operates within lipid metabolism; oxylipin biosynthesis. In terms of biological role, plant lipoxygenases may be involved in a number of diverse aspects of plant physiology including growth and development, pest resistance, and senescence or responses to wounding. May contribute to cell death during the hypersensitive response (HR) by the massive production of free fatty acid hydroperoxides. Catalyzes the hydroperoxidation of lipids containing a cis,cis-1,4-pentadiene structure. The chain is Probable linoleate 9S-lipoxygenase 5 (LOX1.5) from Solanum tuberosum (Potato).